The primary structure comprises 843 residues: Eisosome protein 1 (843 aa).

Ser-2 bears the N-acetylserine mark. Residue Ser-2 is modified to Phosphoserine. A disordered region spans residues 13-44 (HNIGKTSGGGSRTSSITSSKKSLKHGSKSLRK). Positions 33 to 44 (KSLKHGSKSLRK) are enriched in basic residues. Ser-88 and Ser-130 each carry phosphoserine. Residues 120-174 (KMGPKVVRNNSITSATSKTSKESQTKRKSKESPGAAASKAYSMTMETTSLSSQTN) form a disordered region. 2 stretches are compositionally biased toward polar residues: residues 127–137 (RNNSITSATSK) and 163–174 (TMETTSLSSQTN). Ser-182, Ser-401, Ser-584, and Ser-710 each carry phosphoserine. Residues 717–843 (DLPTQLEKIE…QDAISNQEKK (127 aa)) are disordered. The residue at position 720 (Thr-720) is a Phosphothreonine. A compositionally biased stretch (low complexity) spans 752-764 (STAAKEATETSSA). A phosphoserine mark is found at Ser-763 and Ser-775. Over residues 781–797 (SGKEDANDCKSAEHSKE) the composition is skewed to basic and acidic residues. Over residues 798–810 (ISVSQKAGNNKSL) the composition is skewed to polar residues. A phosphoserine mark is found at Ser-816, Ser-828, Ser-829, and Ser-838.

The protein belongs to the EIS1 family.

Its subcellular location is the cytoplasmic granule. It is found in the cell membrane. Required for normal formation of eisosomes, large cytoplasmic protein assemblies that localize to specialized domains on plasma membrane and mark the site of endocytosis. This chain is Eisosome protein 1 (EIS1), found in Saccharomyces cerevisiae (strain RM11-1a) (Baker's yeast).